Here is a 407-residue protein sequence, read N- to C-terminus: Probable acyl-CoA dehydrogenase FadE2 (407 aa).

Belongs to the acyl-CoA dehydrogenase family. The cofactor is FAD.

It catalyses the reaction a 2,3-saturated acyl-CoA + A = a 2,3-dehydroacyl-CoA + AH2. In Mycobacterium tuberculosis (strain ATCC 25618 / H37Rv), this protein is Probable acyl-CoA dehydrogenase FadE2.